The primary structure comprises 296 residues: 4-hydroxybenzoate octaprenyltransferase (296 aa).

The next 8 membrane-spanning stretches (helical) occupy residues 29 to 49 (AGWL…AGGF), 52 to 72 (WHLL…GCCI), 103 to 123 (LVLG…TNAI), 151 to 171 (VLGV…LGEV), 176 to 196 (WLLM…YAMV), 220 to 240 (VILL…MPYV), 243 to 263 (ALFT…YTLI), and 275 to 295 (FRLN…SYAL).

It belongs to the UbiA prenyltransferase family. It depends on Mg(2+) as a cofactor.

The protein localises to the cell inner membrane. It catalyses the reaction all-trans-octaprenyl diphosphate + 4-hydroxybenzoate = 4-hydroxy-3-(all-trans-octaprenyl)benzoate + diphosphate. It functions in the pathway cofactor biosynthesis; ubiquinone biosynthesis. Catalyzes the prenylation of para-hydroxybenzoate (PHB) with an all-trans polyprenyl group. Mediates the second step in the final reaction sequence of ubiquinone-8 (UQ-8) biosynthesis, which is the condensation of the polyisoprenoid side chain with PHB, generating the first membrane-bound Q intermediate 3-octaprenyl-4-hydroxybenzoate. This is 4-hydroxybenzoate octaprenyltransferase from Albidiferax ferrireducens (strain ATCC BAA-621 / DSM 15236 / T118) (Rhodoferax ferrireducens).